The sequence spans 418 residues: Queuine tRNA-ribosyltransferase accessory subunit 2 (418 aa).

Zn(2+)-binding residues include Cys-325, Cys-327, Cys-330, and His-356.

This sequence belongs to the queuine tRNA-ribosyltransferase family. QTRT2 subfamily. In terms of assembly, heterodimer of a catalytic subunit and an accessory subunit. The cofactor is Zn(2+).

The protein localises to the cytoplasm. Non-catalytic subunit of the queuine tRNA-ribosyltransferase (TGT) that catalyzes the base-exchange of a guanine (G) residue with queuine (Q) at position 34 (anticodon wobble position) in tRNAs with GU(N) anticodons (tRNA-Asp, -Asn, -His and -Tyr), resulting in the hypermodified nucleoside queuosine (7-(((4,5-cis-dihydroxy-2-cyclopenten-1-yl)amino)methyl)-7-deazaguanosine). The chain is Queuine tRNA-ribosyltransferase accessory subunit 2 from Drosophila sechellia (Fruit fly).